The following is a 468-amino-acid chain: Na(+)/H(+) antiporter NhaA (468 aa).

10 consecutive transmembrane segments (helical) span residues 32–52 (FLHI…IALL), 83–103 (LHFW…GMEI), 119–139 (ALPM…YLAI), 148–168 (GWAV…ALLG), 178–198 (FLLA…AVAF), 205–225 (GGFL…WIGV), 320–340 (ALHP…NAGV), 354–374 (GAMF…IVSV), 397–417 (LVGL…TLAF), and 428–448 (LGVL…GFIY).

This sequence belongs to the NhaA Na(+)/H(+) (TC 2.A.33) antiporter family.

Its subcellular location is the cell inner membrane. The catalysed reaction is Na(+)(in) + 2 H(+)(out) = Na(+)(out) + 2 H(+)(in). Na(+)/H(+) antiporter that extrudes sodium in exchange for external protons. In Cupriavidus necator (strain ATCC 17699 / DSM 428 / KCTC 22496 / NCIMB 10442 / H16 / Stanier 337) (Ralstonia eutropha), this protein is Na(+)/H(+) antiporter NhaA.